The sequence spans 174 residues: Repair DNA polymerase X (174 aa).

Residues 42 to 51 (REEKMLNDVD) are involved in ssDNA binding. Mg(2+)-binding residues include D49 and D51. An intrachain disulfide couples C81 to C86. D100 lines the Mg(2+) pocket.

This sequence belongs to the DNA polymerase type-X family. Requires Mg(2+) as cofactor.

The protein localises to the virion. It carries out the reaction DNA(n) + a 2'-deoxyribonucleoside 5'-triphosphate = DNA(n+1) + diphosphate. Error-prone polymerase lacking a proofreading 3'-5' exonuclease which catalyzes the gap-filling reaction during the DNA repair process. Specifically binds intermediates in the single-nucleotide base-excision repair process. Also catalyzes DNA polymerization with low nucleotide-insertion fidelity. Probably acts as a strategic DNA mutase, which gives rise to a rapid emergence of variants. Generates mismatched G-G pairs, in that case, the polymerase first binds the deoxynucleotide followed by mismatch formation. Together with the viral DNA ligase, fills the single nucleotide gaps generated by the AP endonuclease. Binds DNA with high affinity via the helix alphaE. The protein is Repair DNA polymerase X of African swine fever virus (isolate Tick/South Africa/Pretoriuskop Pr4/1996) (ASFV).